A 122-amino-acid chain; its full sequence is uncharacterized protein (122 aa).

A helical membrane pass occupies residues 93–113; that stretch reads ILRICIVFLSLKIYTLTLVII.

It localises to the membrane. This is an uncharacterized protein from Saccharomyces cerevisiae (strain ATCC 204508 / S288c) (Baker's yeast).